Here is a 258-residue protein sequence, read N- to C-terminus: HTH-type transcriptional repressor GlcR (258 aa).

The HTH deoR-type domain maps to Q3–L58. Residues I20–D39 constitute a DNA-binding region (H-T-H motif).

Functionally, plays a role in carbon catabolite repression (CCR). Specifically required for transcriptional repression of the levanase operon by glucose but not by other sugars. The chain is HTH-type transcriptional repressor GlcR (glcR) from Bacillus subtilis (strain 168).